We begin with the raw amino-acid sequence, 183 residues long: Efficient mitochondria targeting-associated protein 19 (183 aa).

Residues M1–D25 are Cytoplasmic-facing. Positions M24–A156 constitute an EXPERA domain. The chain crosses the membrane as a helical span at residues T26–I46. The Lumenal portion of the chain corresponds to T47–T81. A helical transmembrane segment spans residues A82 to L102. The Cytoplasmic segment spans residues R103–V110. Residues L111–F131 traverse the membrane as a helical segment. The Lumenal segment spans residues E132–K138. The helical transmembrane segment at W139–M159 threads the bilayer. The Cytoplasmic segment spans residues G160–D183.

It belongs to the TMEM97/sigma-2 receptor family.

The protein localises to the endoplasmic reticulum membrane. In terms of biological role, part of an import route for newly synthesized mitochondrial proteins termed the ER-SURF pathway (ER surface-mediated protein targeting), which retrieves mitochondrial precursor proteins from the ER surface and reroutes them to mitochondria for efficient mitochondrial import. Acts as a quality control factor in the ER, promoting the proteolytic degradation of nonproductive and extramitochondrial precursor proteins in the ER membrane thus removing them from the ER surface. The protein is Efficient mitochondria targeting-associated protein 19 (ema19) of Schizosaccharomyces pombe (strain 972 / ATCC 24843) (Fission yeast).